An 89-amino-acid polypeptide reads, in one-letter code: Small ribosomal subunit protein uS15 (89 aa).

The protein belongs to the universal ribosomal protein uS15 family. In terms of assembly, part of the 30S ribosomal subunit. Forms a bridge to the 50S subunit in the 70S ribosome, contacting the 23S rRNA.

Functionally, one of the primary rRNA binding proteins, it binds directly to 16S rRNA where it helps nucleate assembly of the platform of the 30S subunit by binding and bridging several RNA helices of the 16S rRNA. Its function is as follows. Forms an intersubunit bridge (bridge B4) with the 23S rRNA of the 50S subunit in the ribosome. This chain is Small ribosomal subunit protein uS15, found in Pectobacterium carotovorum subsp. carotovorum (strain PC1).